Consider the following 398-residue polypeptide: Dual-specificity RNA methyltransferase RlmN (398 aa).

The active-site Proton acceptor is the E119. A Radical SAM core domain is found at 125 to 364; the sequence is EEERATLCVS…TIVRKTRGDD (240 aa). A disulfide bridge connects residues C132 and C369. Positions 139, 143, and 146 each coordinate [4Fe-4S] cluster. S-adenosyl-L-methionine-binding positions include 193-194, S225, 247-249, and N326; these read GE and SLH. The S-methylcysteine intermediate role is filled by C369.

This sequence belongs to the radical SAM superfamily. RlmN family. Requires [4Fe-4S] cluster as cofactor.

It is found in the cytoplasm. The catalysed reaction is adenosine(2503) in 23S rRNA + 2 reduced [2Fe-2S]-[ferredoxin] + 2 S-adenosyl-L-methionine = 2-methyladenosine(2503) in 23S rRNA + 5'-deoxyadenosine + L-methionine + 2 oxidized [2Fe-2S]-[ferredoxin] + S-adenosyl-L-homocysteine. The enzyme catalyses adenosine(37) in tRNA + 2 reduced [2Fe-2S]-[ferredoxin] + 2 S-adenosyl-L-methionine = 2-methyladenosine(37) in tRNA + 5'-deoxyadenosine + L-methionine + 2 oxidized [2Fe-2S]-[ferredoxin] + S-adenosyl-L-homocysteine. Functionally, specifically methylates position 2 of adenine 2503 in 23S rRNA and position 2 of adenine 37 in tRNAs. m2A2503 modification seems to play a crucial role in the proofreading step occurring at the peptidyl transferase center and thus would serve to optimize ribosomal fidelity. The protein is Dual-specificity RNA methyltransferase RlmN of Pectobacterium atrosepticum (strain SCRI 1043 / ATCC BAA-672) (Erwinia carotovora subsp. atroseptica).